A 539-amino-acid chain; its full sequence is Membrane protein insertase YidC (539 aa).

Residues 7–27 (IIAIALSFVVLVGWSYLADHM) traverse the membrane as a helical segment. Residues 32–64 (QPAPQAQQEETAPSASQAAPQSASQAAAPAPRA) form a disordered region. The next 3 membrane-spanning stretches (helical) occupy residues 347-367 (YVGN…LVFW), 418-438 (GGCL…QALL), and 498-518 (IMMF…SGLV).

It belongs to the OXA1/ALB3/YidC family. Type 1 subfamily. As to quaternary structure, interacts with the Sec translocase complex via SecD. Specifically interacts with transmembrane segments of nascent integral membrane proteins during membrane integration.

The protein resides in the cell inner membrane. Required for the insertion and/or proper folding and/or complex formation of integral membrane proteins into the membrane. Involved in integration of membrane proteins that insert both dependently and independently of the Sec translocase complex, as well as at least some lipoproteins. Aids folding of multispanning membrane proteins. In Nitratidesulfovibrio vulgaris (strain DSM 19637 / Miyazaki F) (Desulfovibrio vulgaris), this protein is Membrane protein insertase YidC.